The chain runs to 122 residues: Large ribosomal subunit protein uL14 (122 aa).

This sequence belongs to the universal ribosomal protein uL14 family. In terms of assembly, part of the 50S ribosomal subunit. Forms a cluster with proteins L3 and L19. In the 70S ribosome, L14 and L19 interact and together make contacts with the 16S rRNA in bridges B5 and B8.

Binds to 23S rRNA. Forms part of two intersubunit bridges in the 70S ribosome. This is Large ribosomal subunit protein uL14 from Leifsonia xyli subsp. xyli (strain CTCB07).